The sequence spans 775 residues: 1,4-alpha-glucan branching enzyme GlgB (775 aa).

Residues 1–39 are disordered; it reads MTSVHDFATATRPATPSAAAQEPAPALPPGLDRNTLDAL. A compositionally biased stretch (low complexity) spans 8 to 24; sequence ATATRPATPSAAAQEPA. Residue Asp-454 is the Nucleophile of the active site. The active-site Proton donor is Glu-507.

Belongs to the glycosyl hydrolase 13 family. GlgB subfamily. Monomer.

It catalyses the reaction Transfers a segment of a (1-&gt;4)-alpha-D-glucan chain to a primary hydroxy group in a similar glucan chain.. It functions in the pathway glycan biosynthesis; glycogen biosynthesis. Functionally, catalyzes the formation of the alpha-1,6-glucosidic linkages in glycogen by scission of a 1,4-alpha-linked oligosaccharide from growing alpha-1,4-glucan chains and the subsequent attachment of the oligosaccharide to the alpha-1,6 position. The polypeptide is 1,4-alpha-glucan branching enzyme GlgB (Ralstonia nicotianae (strain ATCC BAA-1114 / GMI1000) (Ralstonia solanacearum)).